Here is a 238-residue protein sequence, read N- to C-terminus: MLVIPAVDMKNKKCVQLIQGNPDKKHVELDNPPEIAKKWVSEGAEMLHLVDLDGALDGKRVNDEFIEDIIKTSGVPVQIGGGIRSIEDAVYLIEKGAEKVIIGTVAVENPEIIRELSKKIGSEKIMVSLDAKDGKVVIKGWKEKTKYTPVEIGKILEEMGAGSILFTNVDSEGLLNGINIEPTKELVDNLKIPIVASGGVTTIDDLLKFKKIGVYGVVVGSAIYKNLINLKDAIEAVK.

Asp8 serves as the catalytic Proton acceptor. The Proton donor role is filled by Asp130.

This sequence belongs to the HisA/HisF family.

The protein localises to the cytoplasm. The catalysed reaction is 1-(5-phospho-beta-D-ribosyl)-5-[(5-phospho-beta-D-ribosylamino)methylideneamino]imidazole-4-carboxamide = 5-[(5-phospho-1-deoxy-D-ribulos-1-ylimino)methylamino]-1-(5-phospho-beta-D-ribosyl)imidazole-4-carboxamide. Its pathway is amino-acid biosynthesis; L-histidine biosynthesis; L-histidine from 5-phospho-alpha-D-ribose 1-diphosphate: step 4/9. This is 1-(5-phosphoribosyl)-5-[(5-phosphoribosylamino)methylideneamino] imidazole-4-carboxamide isomerase from Methanococcus maripaludis (strain C7 / ATCC BAA-1331).